Reading from the N-terminus, the 231-residue chain is Large ribosomal subunit protein uL1 (231 aa).

It belongs to the universal ribosomal protein uL1 family. In terms of assembly, part of the 50S ribosomal subunit.

Binds directly to 23S rRNA. The L1 stalk is quite mobile in the ribosome, and is involved in E site tRNA release. In terms of biological role, protein L1 is also a translational repressor protein, it controls the translation of the L11 operon by binding to its mRNA. The sequence is that of Large ribosomal subunit protein uL1 from Pseudomonas savastanoi pv. phaseolicola (strain 1448A / Race 6) (Pseudomonas syringae pv. phaseolicola (strain 1448A / Race 6)).